A 199-amino-acid chain; its full sequence is dITP/XTP pyrophosphatase (199 aa).

8–13 (THNRNK) is a substrate binding site. The Proton acceptor role is filled by aspartate 68. Aspartate 68 is a binding site for Mg(2+). Residues serine 69, 151 to 154 (HGYD), lysine 174, and 179 to 180 (HR) each bind substrate.

The protein belongs to the HAM1 NTPase family. Homodimer. It depends on Mg(2+) as a cofactor.

The enzyme catalyses XTP + H2O = XMP + diphosphate + H(+). It carries out the reaction dITP + H2O = dIMP + diphosphate + H(+). The catalysed reaction is ITP + H2O = IMP + diphosphate + H(+). Its function is as follows. Pyrophosphatase that catalyzes the hydrolysis of nucleoside triphosphates to their monophosphate derivatives, with a high preference for the non-canonical purine nucleotides XTP (xanthosine triphosphate), dITP (deoxyinosine triphosphate) and ITP. Seems to function as a house-cleaning enzyme that removes non-canonical purine nucleotides from the nucleotide pool, thus preventing their incorporation into DNA/RNA and avoiding chromosomal lesions. This is dITP/XTP pyrophosphatase from Leifsonia xyli subsp. xyli (strain CTCB07).